Reading from the N-terminus, the 426-residue chain is Histidine--tRNA ligase (426 aa).

It belongs to the class-II aminoacyl-tRNA synthetase family. Homodimer.

It is found in the cytoplasm. It catalyses the reaction tRNA(His) + L-histidine + ATP = L-histidyl-tRNA(His) + AMP + diphosphate + H(+). In Shewanella baltica (strain OS223), this protein is Histidine--tRNA ligase.